Consider the following 400-residue polypeptide: Arrestin, lateral eye (400 aa).

This sequence belongs to the arrestin family. Phosphorylated.

In terms of biological role, plays an important role in the photoreceptor transduction. This chain is Arrestin, lateral eye, found in Limulus polyphemus (Atlantic horseshoe crab).